A 501-amino-acid polypeptide reads, in one-letter code: Membrane-bound lytic murein transglycosylase F (501 aa).

The signal sequence occupies residues 1–29; it reads MTKILLNTASTVLTRLWKLSLLGLVFAVA. The segment at 30–274 is non-LT domain; sequence AATLVSSRIP…DAMETFYGHL (245 aa). Positions 275 to 501 are LT domain; it reads GEIDYSGAIL…VKSISGTSSL (227 aa). Residue glutamate 321 is part of the active site.

In the N-terminal section; belongs to the bacterial solute-binding protein 3 family. This sequence in the C-terminal section; belongs to the transglycosylase Slt family.

It localises to the cell outer membrane. It catalyses the reaction Exolytic cleavage of the (1-&gt;4)-beta-glycosidic linkage between N-acetylmuramic acid (MurNAc) and N-acetylglucosamine (GlcNAc) residues in peptidoglycan, from either the reducing or the non-reducing ends of the peptidoglycan chains, with concomitant formation of a 1,6-anhydrobond in the MurNAc residue.. In terms of biological role, murein-degrading enzyme that degrades murein glycan strands and insoluble, high-molecular weight murein sacculi, with the concomitant formation of a 1,6-anhydromuramoyl product. Lytic transglycosylases (LTs) play an integral role in the metabolism of the peptidoglycan (PG) sacculus. Their lytic action creates space within the PG sacculus to allow for its expansion as well as for the insertion of various structures such as secretion systems and flagella. In Saccharophagus degradans (strain 2-40 / ATCC 43961 / DSM 17024), this protein is Membrane-bound lytic murein transglycosylase F.